A 334-amino-acid polypeptide reads, in one-letter code: MLNTLIVGASGYAGAELTAYLNRHPHMNITGLAVSAQSADAGKLLSELHPQLKGILDLPLQPLVDVAQAAKGIDVVFLATAHEVSHDLAPQFLAAGCVVFDLSGAFRVRDAAFYSQYYGFEHQHPDWLDKAVYGLAEWQSEDIKQAQLIAVPGCYPTASQLALKPLVDGQLLNDAQWPVINAVSGVSGAGRKASMGNSFCEVSLQPYGLFTHRHQPEIVAHLGTPVIFTPHLGNFARGILATITCRLKAGVTAQNIADAYHHAYQNKPLVRLYQQGVPALKAVVGLPFCDIGFSVQGEHLIIVATEDNLLKGAAAQAVQCMNIRFGFPETQSLL.

Residue C154 is part of the active site.

It belongs to the NAGSA dehydrogenase family. Type 1 subfamily.

The protein localises to the cytoplasm. It catalyses the reaction N-acetyl-L-glutamate 5-semialdehyde + phosphate + NADP(+) = N-acetyl-L-glutamyl 5-phosphate + NADPH + H(+). Its pathway is amino-acid biosynthesis; L-arginine biosynthesis; N(2)-acetyl-L-ornithine from L-glutamate: step 3/4. Its function is as follows. Catalyzes the NADPH-dependent reduction of N-acetyl-5-glutamyl phosphate to yield N-acetyl-L-glutamate 5-semialdehyde. The polypeptide is N-acetyl-gamma-glutamyl-phosphate reductase (Yersinia pseudotuberculosis serotype I (strain IP32953)).